A 70-amino-acid polypeptide reads, in one-letter code: ATP synthase subunit c (70 aa).

The next 2 membrane-spanning stretches (helical) occupy residues 1-21 and 47-67; these read MNFLAAAIAAGLAAFAASYGN and FIGVGLIEAVPILSIVVSFLI.

It belongs to the ATPase C chain family. In terms of assembly, F-type ATPases have 2 components, F(1) - the catalytic core - and F(0) - the membrane proton channel. F(1) has five subunits: alpha(3), beta(3), gamma(1), delta(1), epsilon(1). F(0) has three main subunits: a(1), b(2) and c(10-14). The alpha and beta chains form an alternating ring which encloses part of the gamma chain. F(1) is attached to F(0) by a central stalk formed by the gamma and epsilon chains, while a peripheral stalk is formed by the delta and b chains.

It is found in the cell membrane. In terms of biological role, f(1)F(0) ATP synthase produces ATP from ADP in the presence of a proton or sodium gradient. F-type ATPases consist of two structural domains, F(1) containing the extramembraneous catalytic core and F(0) containing the membrane proton channel, linked together by a central stalk and a peripheral stalk. During catalysis, ATP synthesis in the catalytic domain of F(1) is coupled via a rotary mechanism of the central stalk subunits to proton translocation. Functionally, key component of the F(0) channel; it plays a direct role in translocation across the membrane. A homomeric c-ring of between 10-14 subunits forms the central stalk rotor element with the F(1) delta and epsilon subunits. This is ATP synthase subunit c from Latilactobacillus sakei subsp. sakei (strain 23K) (Lactobacillus sakei subsp. sakei).